The sequence spans 2026 residues: E3 ubiquitin-protein ligase TRIP12 (2026 aa).

Composition is skewed to polar residues over residues 1-10 (MSNRPNSNPG), 32-42 (GRNSLSLSVGS), and 73-84 (SSVSEPNITFSP). The interval 1–437 (MSNRPNSNPG…SGESESDDSE (437 aa)) is disordered. 4 stretches are compositionally biased toward low complexity: residues 94 to 112 (SSHF…AISP), 135 to 161 (AEPA…STPS), 171 to 188 (LLSS…SAAG), and 199 to 241 (AAKP…SSAA). Over residues 359–371 (QKTTGSCASTSRR) the composition is skewed to polar residues. The span at 379–391 (GAAEARRQEKMAD) shows a compositional bias: basic and acidic residues. Positions 392-404 (SDNNQDGANSSAA) are enriched in polar residues. The span at 412–430 (GASASSSVAGAVGMTTSGE) shows a compositional bias: low complexity. Positions 789–876 (MLKKGSAQTT…DPELAKCFIK (88 aa)) constitute a WWE domain. 2 disordered regions span residues 1008–1123 (SNVT…SVSN) and 1441–1470 (GCKD…KQDE). A compositionally biased stretch (basic residues) spans 1040–1053 (KRKRLPKRGPRRPK). Basic and acidic residues predominate over residues 1056–1065 (PPRDDDKVDN). Residues 1068–1079 (KSPTTTQSPKSS) show a composition bias toward low complexity. Positions 1094-1104 (TQANSANSEPS) are enriched in polar residues. The segment at 1530–1604 (EIIPTGEFIN…AMQRLLDTNP (75 aa)) is K-box. Residues 1919–2026 (PDHGYTHDSR…REGQQSFHLS (108 aa)) form the HECT domain. Catalysis depends on cysteine 1993, which acts as the Glycyl thioester intermediate.

Belongs to the UPL family. K-HECT subfamily.

It is found in the nucleus. The protein localises to the nucleoplasm. The catalysed reaction is S-ubiquitinyl-[E2 ubiquitin-conjugating enzyme]-L-cysteine + [acceptor protein]-L-lysine = [E2 ubiquitin-conjugating enzyme]-L-cysteine + N(6)-ubiquitinyl-[acceptor protein]-L-lysine.. It participates in protein modification; protein ubiquitination. E3 ubiquitin-protein ligase involved in ubiquitin fusion degradation (UFD) pathway and regulation of DNA repair. Part of the ubiquitin fusion degradation (UFD) pathway, a process that mediates ubiquitination of protein at their N-terminus, regardless of the presence of lysine residues in target proteins. Acts as a key regulator of DNA damage response by acting as a suppressor of RNF168, an E3 ubiquitin-protein ligase that promotes accumulation of 'Lys-63'-linked histone H2A and H2AX at DNA damage sites, thereby acting as a guard against excessive spreading of ubiquitinated chromatin at damaged chromosomes. This Danio rerio (Zebrafish) protein is E3 ubiquitin-protein ligase TRIP12 (trip12).